The sequence spans 131 residues: Type 3 secretion system pilotin (131 aa).

The signal sequence occupies residues 1-15; sequence MSRIIALIISFLLVG. A lipid anchor (N-palmitoyl cysteine) is attached at cysteine 16. Cysteine 16 carries the S-diacylglycerol cysteine lipid modification.

It belongs to the ExsB/YscW family. In terms of assembly, interacts with YscC/SctC.

Its subcellular location is the cell outer membrane. Its function is as follows. Involved in the synthesis of the type III secretion system (T3SS), also called injectisome, which is used to inject bacterial effector proteins into eukaryotic host cells. Pilot protein that is required for the proper localization of the secretin YscC/SctC in the outer membrane. Also required for efficient oligomerization of YscC/SctC and stabilization of the oligomers. This chain is Type 3 secretion system pilotin, found in Yersinia enterocolitica.